Here is a 548-residue protein sequence, read N- to C-terminus: Sesquiterpene synthase 9 (548 aa).

The Mg(2+) site is built by D300, D304, and E453. Residues 300–304 (DDTFD) carry the DDXXD motif motif.

Belongs to the terpene synthase family. Tpsa subfamily. The cofactor is Mg(2+). It depends on Mn(2+) as a cofactor. As to expression, mostly expressed in stem and trichomes, to a lower extent in roots, leaves and flowers and, at low levels, in fruits.

It is found in the cytoplasm. The enzyme catalyses (2E,6E)-farnesyl diphosphate = germacrene C + diphosphate. It carries out the reaction (2E)-geranyl diphosphate = terpinolene + diphosphate. The catalysed reaction is (2E)-geranyl diphosphate = limonene + diphosphate. It catalyses the reaction (2E)-geranyl diphosphate = beta-myrcene + diphosphate. The enzyme catalyses (2Z,6Z)-farnesyl diphosphate = germacrene C + diphosphate. The protein operates within secondary metabolite biosynthesis; terpenoid biosynthesis. Its function is as follows. Involved in the biosynthesis of germacrene C, one of the most abundant sesquiterpene in the leaf oil of tomato. Produces mainly germacrene C, but also smaller amounts of germacrene A, B and D when used with farnesyl diphosphate (FPP) as substrate; able to use both (2E,6E)-farnesyl diphosphate ((EE)-FPP) and (2Z,6Z)-farnesyl diphosphate ((ZZ)-FPP). No or low activity with geranylgeranyl diphosphate (GGPP). Can act with a low efficiency as a monoterpene synthase with geranyl diphosphate (GPP) as substrate, thus producing beta-myrcene, limonene and terpinolene. The chain is Sesquiterpene synthase 9 from Solanum lycopersicum (Tomato).